The chain runs to 52 residues: Large ribosomal subunit protein bL32c (52 aa).

This sequence belongs to the bacterial ribosomal protein bL32 family.

The protein resides in the plastid. Its subcellular location is the chloroplast. The polypeptide is Large ribosomal subunit protein bL32c (Capsella bursa-pastoris (Shepherd's purse)).